Reading from the N-terminus, the 233-residue chain is UPF0502 protein YpsIP31758_2048 (233 aa).

The protein belongs to the UPF0502 family.

The protein is UPF0502 protein YpsIP31758_2048 of Yersinia pseudotuberculosis serotype O:1b (strain IP 31758).